The sequence spans 148 residues: Ribonuclease pancreatic (148 aa).

The N-terminal stretch at 1–25 (MGLEKSLILFPLLVLVVGWVQPSLG) is a signal peptide. Substrate-binding positions include lysine 32, arginine 35, 65–69 (KPVNT), lysine 90, and arginine 109. 4 cysteine pairs are disulfide-bonded: cysteine 50/cysteine 108, cysteine 64/cysteine 119, cysteine 82/cysteine 134, and cysteine 89/cysteine 96. The Proton donor role is filled by histidine 143.

The protein belongs to the pancreatic ribonuclease family. In terms of assembly, monomer. Interacts with and forms tight 1:1 complexes with RNH1. Dimerization of two such complexes may occur. Interaction with RNH1 inhibits this protein. As to expression, pancreas.

The protein localises to the secreted. The catalysed reaction is an [RNA] containing cytidine + H2O = an [RNA]-3'-cytidine-3'-phosphate + a 5'-hydroxy-ribonucleotide-3'-[RNA].. It carries out the reaction an [RNA] containing uridine + H2O = an [RNA]-3'-uridine-3'-phosphate + a 5'-hydroxy-ribonucleotide-3'-[RNA].. Its function is as follows. Endonuclease that catalyzes the cleavage of RNA on the 3' side of pyrimidine nucleotides. Acts on single-stranded and double-stranded RNA. The protein is Ribonuclease pancreatic (RNASE1) of Peromyscus leucopus (White-footed mouse).